Here is a 59-residue protein sequence, read N- to C-terminus: UPF0509 protein YciZ (59 aa).

This sequence belongs to the UPF0509 family.

This Salmonella agona (strain SL483) protein is UPF0509 protein YciZ.